Here is a 303-residue protein sequence, read N- to C-terminus: Protoheme IX farnesyltransferase 2 (303 aa).

9 consecutive transmembrane segments (helical) span residues 29–49 (VVALMLLTVLVGMCLSVPGIV), 51–71 (LQPLVAGMAGIAMMAGSAAAF), 96–118 (ISTTKAVTFAVSLGSLGFVVLYT), 123–143 (LTAWLTFASLIGYALVYTAYL), 150–170 (NIVIGGLAGAMPPLLGWTAIT), 177–197 (ALLLVIIIFTWTPPHFWALAI), 223–243 (CILLYTILLAIACLLPVLVGM), 244–264 (CGPIYLVGSTVLSCGFIYKAW), and 281–301 (FSIYHLMVLFIVLLVDHYFWV).

Belongs to the UbiA prenyltransferase family. Protoheme IX farnesyltransferase subfamily.

Its subcellular location is the cell inner membrane. It carries out the reaction heme b + (2E,6E)-farnesyl diphosphate + H2O = Fe(II)-heme o + diphosphate. It participates in porphyrin-containing compound metabolism; heme O biosynthesis; heme O from protoheme: step 1/1. Functionally, converts heme B (protoheme IX) to heme O by substitution of the vinyl group on carbon 2 of heme B porphyrin ring with a hydroxyethyl farnesyl side group. In Shewanella frigidimarina (strain NCIMB 400), this protein is Protoheme IX farnesyltransferase 2.